A 428-amino-acid chain; its full sequence is Glutamate-1-semialdehyde 2,1-aminomutase (428 aa).

Lys265 is modified (N6-(pyridoxal phosphate)lysine).

The protein belongs to the class-III pyridoxal-phosphate-dependent aminotransferase family. HemL subfamily. Homodimer. Requires pyridoxal 5'-phosphate as cofactor.

It is found in the cytoplasm. It carries out the reaction (S)-4-amino-5-oxopentanoate = 5-aminolevulinate. It functions in the pathway porphyrin-containing compound metabolism; protoporphyrin-IX biosynthesis; 5-aminolevulinate from L-glutamyl-tRNA(Glu): step 2/2. In Vesicomyosocius okutanii subsp. Calyptogena okutanii (strain HA), this protein is Glutamate-1-semialdehyde 2,1-aminomutase.